A 69-amino-acid polypeptide reads, in one-letter code: Bowman-Birk type proteinase inhibitor A2 (69 aa).

Cystine bridges form between C12–C31, C18–C29, C38–C45, and C42–C59.

The protein belongs to the Bowman-Birk serine protease inhibitor family. Expressed in bulb (at protein level).

In terms of biological role, serine protease inhibitor. In Hyacinthus orientalis (Common hyacinth), this protein is Bowman-Birk type proteinase inhibitor A2.